Here is a 746-residue protein sequence, read N- to C-terminus: Serine/threonine-protein kinase SMU1 (746 aa).

Disordered stretches follow at residues 1-138 (MSLV…DTLH) and 155-212 (QRSH…GSRN). Low complexity-rich tracts occupy residues 15 to 54 (SSAN…SSTT) and 85 to 105 (SVSS…PSSA). Polar residues-rich tracts occupy residues 106-121 (LPWS…STAT), 128-138 (RSNTAGPDTLH), and 156-176 (RSHS…SSPT). Positions 194–203 (PSRDRERSRD) are enriched in basic and acidic residues. The region spanning 237–250 (ISTPYDPVHLTHVG) is the CRIB domain. A disordered region spans residues 301–451 (GGSDVWKKMG…RRETKKSTIK (151 aa)). Positions 370 to 380 (PPSNASTSSAD) are enriched in polar residues. Residues 414 to 430 (SPASRAPDAPAAVSAAS) show a composition bias toward low complexity. A Protein kinase domain is found at 472–723 (YRSLQKIGQG…ALGMLAHPFL (252 aa)). ATP is bound by residues 478-486 (IGQGASGGV) and Lys-501. The Proton acceptor role is filled by Asp-591.

This sequence belongs to the protein kinase superfamily. STE Ser/Thr protein kinase family. STE20 subfamily.

The protein resides in the cytoplasm. It localises to the nucleus. The catalysed reaction is L-seryl-[protein] + ATP = O-phospho-L-seryl-[protein] + ADP + H(+). It catalyses the reaction L-threonyl-[protein] + ATP = O-phospho-L-threonyl-[protein] + ADP + H(+). Functionally, MAP4K component of the MAPK pathway required for the mating pheromone response and the regulation of cell polarity and cell cycle. Phosphorylates histone H2B to form H2BS10ph. The sequence is that of Serine/threonine-protein kinase SMU1 (SMU1) from Mycosarcoma maydis (Corn smut fungus).